A 522-amino-acid chain; its full sequence is Probable G-protein coupled receptor egl-47 (522 aa).

Transmembrane regions (helical) follow at residues 140-160 (IIKL…NSFL), 184-204 (ASMI…LSAI), 238-258 (FVFF…KVVE), 276-296 (FILV…YHLY), 345-365 (PLLL…LYFL), 398-418 (ICWA…ICST), and 472-492 (LERT…LLLF).

This sequence belongs to the G-protein coupled receptor family. As to expression, expressed in some neurons in the head, the HSN neurons and the PVQ interneurons of the tail.

The protein resides in the membrane. Orphan receptor. Regulates egg-laying probably by activating guanine nucleotide-binding protein goa-1, in the hermaphrodite-specific neurons (HSNs). This is Probable G-protein coupled receptor egl-47 from Caenorhabditis elegans.